A 162-amino-acid polypeptide reads, in one-letter code: Necrosis-inducing secreted protein 1 (162 aa).

The first 19 residues, 1-19, serve as a signal peptide directing secretion; that stretch reads MQFLTSLAAAASLVSLASA. 4 N-linked (GlcNAc...) asparagine glycosylation sites follow: Asn88, Asn126, Asn133, and Asn150. The segment at 103–132 is BAK1/SERK3-binding; that stretch reads EYVIAASLFSLYGASSSPTVSNYNVTVNVG.

Belongs to the NIS1 effector family. As to quaternary structure, interacts with the host pattern recognition receptor (PRR)-associated kinases BAK1/SERK3, BKK1/SERK4 and BIK1.

It localises to the secreted. The protein resides in the host cytoplasm. In terms of biological role, secreted effector that induces necrotic lesions in Nicotiana benthamiana. Interacts with the host receptor-like kinases (RLKs) BAK1/SERK3 and BKK1/SERK4, inhibits their kinase activity and suppresses INF1-induced pathogen-associated molecular pattern (PAMP)-triggered immunity (PTI) in N.benthamiana. Also interacts with the host receptor-like cytoplasmic kinase (RLCK) BIK1 and inhibits its kinase activity, thereby inhibiting PAMP-induced ROS generation. In PTI, phosphorylation relaying by RLKs and RLCKs is critical for the initiation of downstream signaling. The chain is Necrosis-inducing secreted protein 1 from Colletotrichum orbiculare (strain 104-T / ATCC 96160 / CBS 514.97 / LARS 414 / MAFF 240422) (Cucumber anthracnose fungus).